Reading from the N-terminus, the 119-residue chain is Large ribosomal subunit protein bL20 (119 aa).

This sequence belongs to the bacterial ribosomal protein bL20 family.

Functionally, binds directly to 23S ribosomal RNA and is necessary for the in vitro assembly process of the 50S ribosomal subunit. It is not involved in the protein synthesizing functions of that subunit. The polypeptide is Large ribosomal subunit protein bL20 (Shewanella sediminis (strain HAW-EB3)).